Reading from the N-terminus, the 338-residue chain is Glycerol-3-phosphate dehydrogenase [NAD(P)+] (338 aa).

NADPH-binding residues include serine 12, tryptophan 13, and lysine 110. Residues lysine 110, glycine 141, and serine 143 each contribute to the sn-glycerol 3-phosphate site. Residue alanine 145 participates in NADPH binding. Lysine 196, aspartate 249, serine 259, arginine 260, and asparagine 261 together coordinate sn-glycerol 3-phosphate. Lysine 196 acts as the Proton acceptor in catalysis. Residue arginine 260 coordinates NADPH. NADPH-binding residues include valine 284 and glutamate 286.

The protein belongs to the NAD-dependent glycerol-3-phosphate dehydrogenase family.

It localises to the cytoplasm. The catalysed reaction is sn-glycerol 3-phosphate + NAD(+) = dihydroxyacetone phosphate + NADH + H(+). It carries out the reaction sn-glycerol 3-phosphate + NADP(+) = dihydroxyacetone phosphate + NADPH + H(+). Its pathway is membrane lipid metabolism; glycerophospholipid metabolism. Catalyzes the reduction of the glycolytic intermediate dihydroxyacetone phosphate (DHAP) to sn-glycerol 3-phosphate (G3P), the key precursor for phospholipid synthesis. This Lactiplantibacillus plantarum (strain ATCC BAA-793 / NCIMB 8826 / WCFS1) (Lactobacillus plantarum) protein is Glycerol-3-phosphate dehydrogenase [NAD(P)+].